The chain runs to 819 residues: MNAHALGILEFSRLLAHVAGRATSAPGAAAVRALTPRTDREWIEAEHARVRAVRALVASELGWPTEPIPDIGEPLRRLRIEGLSWTALELLQGATLLRSSRRTRATLRDPRRPAIMLAYLVRYAEALVDLEPREQAIERAIGDDGTVRDDASPTLRKVRRDLRETEGQLVRLLEREMGKLEAHHQVSDLSVTMRNGRWVMPMRREARGYVGGIVHDSSGTGATIYVEPPAAVEFGNRVRELEIEEQREVERVLRALTDEIRPYHDAIGGAYDALVALDSLYARARYAIEAQCAPVTFGEPSAGFRIVDGRHPLLLASGGAVVPFDLTLHAGERTMLVSGPNTGGKTVLLKAIGLISMMAQCGVPAPLGETSQLAVFDDLYADVGDEQSIEASLSTFSAHLKNLGEILRSATTSSLVLIDELGSGTDPAEGAALGGAILETLTRRGTLTLATTHLGQLKLLATDVEGVVNASLQFDAVQLAPTYRLLKGVPGRSYGLSIARRLQIDEAVIQRAEERLPSGERDMAVLLADVEAREALLADRERLMEIDQEKLRARLATVGDRELKVREREREAERSARQEARRFLLEARGQVERAIADVKRQAQVEGEAFEETARAARRSIEEAAAEQGEAVAYVGLRGERDRARVDAKRGAAAAAANPSLGRTLRPERGAVAPLGEGDHVIVSTLDGKQGRIVSVRGQDARVAVGSLTVTVPLRTLTRSAAAPVSMYRTPILGDVPEVEPVREVDVRGLRVDEVDDQVLQALDAAVRNDLRELRIIHGKGTGALRSRVSEMLKKDTRVTGFRLGAWNEGGAGVTVAELA.

339–346 (GPNTGGKT) serves as a coordination point for ATP. A Smr domain is found at 744–819 (VDVRGLRVDE…GAGVTVAELA (76 aa)).

It belongs to the DNA mismatch repair MutS family. MutS2 subfamily. As to quaternary structure, homodimer. Binds to stalled ribosomes, contacting rRNA.

In terms of biological role, endonuclease that is involved in the suppression of homologous recombination and thus may have a key role in the control of bacterial genetic diversity. Functionally, acts as a ribosome collision sensor, splitting the ribosome into its 2 subunits. Detects stalled/collided 70S ribosomes which it binds and splits by an ATP-hydrolysis driven conformational change. Acts upstream of the ribosome quality control system (RQC), a ribosome-associated complex that mediates the extraction of incompletely synthesized nascent chains from stalled ribosomes and their subsequent degradation. Probably generates substrates for RQC. The sequence is that of Endonuclease MutS2 from Gemmatimonas aurantiaca (strain DSM 14586 / JCM 11422 / NBRC 100505 / T-27).